The sequence spans 226 residues: Orotidine 5'-phosphate decarboxylase (226 aa).

Residues aspartate 8, lysine 30, 58-67, threonine 117, arginine 177, glutamine 186, glycine 206, and arginine 207 contribute to the substrate site; that span reads DLKIHDIPNT. Residue lysine 60 is the Proton donor of the active site.

This sequence belongs to the OMP decarboxylase family. Type 1 subfamily. In terms of assembly, homodimer.

It carries out the reaction orotidine 5'-phosphate + H(+) = UMP + CO2. The protein operates within pyrimidine metabolism; UMP biosynthesis via de novo pathway; UMP from orotate: step 2/2. Functionally, catalyzes the decarboxylation of orotidine 5'-monophosphate (OMP) to uridine 5'-monophosphate (UMP). The chain is Orotidine 5'-phosphate decarboxylase from Campylobacter jejuni subsp. doylei (strain ATCC BAA-1458 / RM4099 / 269.97).